A 302-amino-acid polypeptide reads, in one-letter code: MSTVPEISSAPFGRLLTAMVTPFDTAGAVDFALAARLARYLVDQGSDGLIVCGTTGESPTLSWEEQYQLLETVRNAVNGSAKVLAGTGSNSTSEAIHATAKAAEAGADGALVVVPYYNKPPQAGLESHFRAVAQAAPDLPLMLYNIPGRTGCSISPITVQRLMNCSNIVSFKAASGTTNEVTDLRIRCGSRLAIYSGDDGLLLPMLSVGAVGVVSVASHIVGMRLKAMIEAYFAGENSLALSHHEQLQPLFKALFATTNPIPVKAALELIGWPVGAPRSPLLPLENQMKNELMKTISALLQT.

T55 contacts pyruvate. Catalysis depends on Y144, which acts as the Proton donor/acceptor. The active-site Schiff-base intermediate with substrate is K172. A pyruvate-binding site is contributed by V214.

The protein belongs to the DapA family. As to quaternary structure, homotetramer; dimer of dimers.

The protein localises to the cytoplasm. The enzyme catalyses L-aspartate 4-semialdehyde + pyruvate = (2S,4S)-4-hydroxy-2,3,4,5-tetrahydrodipicolinate + H2O + H(+). The protein operates within amino-acid biosynthesis; L-lysine biosynthesis via DAP pathway; (S)-tetrahydrodipicolinate from L-aspartate: step 3/4. Catalyzes the condensation of (S)-aspartate-beta-semialdehyde [(S)-ASA] and pyruvate to 4-hydroxy-tetrahydrodipicolinate (HTPA). This Prochlorococcus marinus (strain SARG / CCMP1375 / SS120) protein is 4-hydroxy-tetrahydrodipicolinate synthase.